The sequence spans 142 residues: Galactose-6-phosphate isomerase subunit LacA 2 (142 aa).

The protein belongs to the LacAB/RpiB family. Heteromultimeric protein consisting of LacA and LacB.

The enzyme catalyses aldehydo-D-galactose 6-phosphate = keto-D-tagatose 6-phosphate. Its pathway is carbohydrate metabolism; D-galactose 6-phosphate degradation; D-tagatose 6-phosphate from D-galactose 6-phosphate: step 1/1. The chain is Galactose-6-phosphate isomerase subunit LacA 2 from Streptococcus pyogenes serotype M3 (strain ATCC BAA-595 / MGAS315).